Consider the following 219-residue polypeptide: Histidinol-phosphate aminotransferase (219 aa).

The protein belongs to the class-II pyridoxal-phosphate-dependent aminotransferase family. Histidinol-phosphate aminotransferase subfamily. In terms of assembly, homodimer. Pyridoxal 5'-phosphate serves as cofactor.

The catalysed reaction is L-histidinol phosphate + 2-oxoglutarate = 3-(imidazol-4-yl)-2-oxopropyl phosphate + L-glutamate. It participates in amino-acid biosynthesis; L-histidine biosynthesis; L-histidine from 5-phospho-alpha-D-ribose 1-diphosphate: step 7/9. This is Histidinol-phosphate aminotransferase (hisC) from Mycolicibacterium smegmatis (Mycobacterium smegmatis).